Consider the following 147-residue polypeptide: Large ribosomal subunit protein uL13 (147 aa).

Belongs to the universal ribosomal protein uL13 family. Part of the 50S ribosomal subunit.

Its function is as follows. This protein is one of the early assembly proteins of the 50S ribosomal subunit, although it is not seen to bind rRNA by itself. It is important during the early stages of 50S assembly. This is Large ribosomal subunit protein uL13 from Lactobacillus johnsonii (strain CNCM I-12250 / La1 / NCC 533).